Reading from the N-terminus, the 178-residue chain is Transcription factor E (178 aa).

Residues 3 to 86 (AHEALAEIAG…YWRITDEPIQ (84 aa)) form the HTH TFE/IIEalpha-type domain.

It belongs to the TFE family. Monomer. Interaction with RNA polymerase subunits RpoF and RpoE is necessary for Tfe stimulatory transcription activity. Able to interact with Tbp and RNA polymerase in the absence of DNA promoter. Interacts both with the preinitiation and elongation complexes.

Functionally, transcription factor that plays a role in the activation of archaeal genes transcribed by RNA polymerase. Facilitates transcription initiation by enhancing TATA-box recognition by TATA-box-binding protein (Tbp), and transcription factor B (Tfb) and RNA polymerase recruitment. Not absolutely required for transcription in vitro, but particularly important in cases where Tbp or Tfb function is not optimal. It dynamically alters the nucleic acid-binding properties of RNA polymerases by stabilizing the initiation complex and destabilizing elongation complexes. Seems to translocate with the RNA polymerase following initiation and acts by binding to the non template strand of the transcription bubble in elongation complexes. The chain is Transcription factor E from Thermofilum pendens (strain DSM 2475 / Hrk 5).